Consider the following 95-residue polypeptide: Co-chaperonin GroES (95 aa).

This sequence belongs to the GroES chaperonin family. In terms of assembly, heptamer of 7 subunits arranged in a ring. Interacts with the chaperonin GroEL.

It localises to the cytoplasm. Together with the chaperonin GroEL, plays an essential role in assisting protein folding. The GroEL-GroES system forms a nano-cage that allows encapsulation of the non-native substrate proteins and provides a physical environment optimized to promote and accelerate protein folding. GroES binds to the apical surface of the GroEL ring, thereby capping the opening of the GroEL channel. In Streptococcus mutans serotype c (strain ATCC 700610 / UA159), this protein is Co-chaperonin GroES.